Here is a 339-residue protein sequence, read N- to C-terminus: Ketol-acid reductoisomerase (NADP(+)) (339 aa).

A KARI N-terminal Rossmann domain is found at 1–182 (MKVYYDADCD…GGGRSGIIET (182 aa)). Residues 24 to 27 (YGSQ), Arg-48, Ser-51, Ser-53, and 83 to 86 (DEHQ) each bind NADP(+). His-108 is a catalytic residue. Gly-134 contacts NADP(+). The KARI C-terminal knotted domain maps to 183-328 (NFREECETDL…AKLRAMMPWI (146 aa)). Mg(2+) contacts are provided by Asp-191, Glu-195, Glu-227, and Glu-231. A substrate-binding site is contributed by Ser-252.

The protein belongs to the ketol-acid reductoisomerase family. Mg(2+) serves as cofactor.

The catalysed reaction is (2R)-2,3-dihydroxy-3-methylbutanoate + NADP(+) = (2S)-2-acetolactate + NADPH + H(+). It carries out the reaction (2R,3R)-2,3-dihydroxy-3-methylpentanoate + NADP(+) = (S)-2-ethyl-2-hydroxy-3-oxobutanoate + NADPH + H(+). Its pathway is amino-acid biosynthesis; L-isoleucine biosynthesis; L-isoleucine from 2-oxobutanoate: step 2/4. It participates in amino-acid biosynthesis; L-valine biosynthesis; L-valine from pyruvate: step 2/4. Functionally, involved in the biosynthesis of branched-chain amino acids (BCAA). Catalyzes an alkyl-migration followed by a ketol-acid reduction of (S)-2-acetolactate (S2AL) to yield (R)-2,3-dihydroxy-isovalerate. In the isomerase reaction, S2AL is rearranged via a Mg-dependent methyl migration to produce 3-hydroxy-3-methyl-2-ketobutyrate (HMKB). In the reductase reaction, this 2-ketoacid undergoes a metal-dependent reduction by NADPH to yield (R)-2,3-dihydroxy-isovalerate. This is Ketol-acid reductoisomerase (NADP(+)) from Novosphingobium aromaticivorans (strain ATCC 700278 / DSM 12444 / CCUG 56034 / CIP 105152 / NBRC 16084 / F199).